We begin with the raw amino-acid sequence, 113 residues long: Small ribosomal subunit protein uS17 (113 aa).

The protein belongs to the universal ribosomal protein uS17 family. As to quaternary structure, part of the 30S ribosomal subunit.

Functionally, one of the primary rRNA binding proteins, it binds specifically to the 5'-end of 16S ribosomal RNA. This is Small ribosomal subunit protein uS17 from Nanoarchaeum equitans (strain Kin4-M).